Reading from the N-terminus, the 334-residue chain is MLNVVIVGASGYAGAELVNYMHRHRFANIKKIFVSKNSLNIDKLFSDVHQQFKNIVDLRFDTIRNCTLIKKNIDAVFLATDHRVSHSLVPFFLSSNCIVFDLSASYRMNNKKVYLDYYGFVHEYEELLKNSVYGLAEWEQEKIKKANLIALPGCYATCIQLVLKPLIKENVLCDKNIPIINAISGVSGAGRKASLNNSFCEVSLQPYNIFTHRHTPEIIEKLGVPVIFIPHLGPFSRGIIATITCKLKPNVKSIDIHNIFNKFYKNKPLIRIYKKYLPSIKSVEKQPFCDIGFVIKDDYIVIVAAEDNLLKGAAAQAVQCFNVRFGFSETESII.

Residue cysteine 154 is part of the active site.

This sequence belongs to the NAGSA dehydrogenase family. Type 1 subfamily.

It is found in the cytoplasm. The catalysed reaction is N-acetyl-L-glutamate 5-semialdehyde + phosphate + NADP(+) = N-acetyl-L-glutamyl 5-phosphate + NADPH + H(+). The protein operates within amino-acid biosynthesis; L-arginine biosynthesis; N(2)-acetyl-L-ornithine from L-glutamate: step 3/4. In terms of biological role, catalyzes the NADPH-dependent reduction of N-acetyl-5-glutamyl phosphate to yield N-acetyl-L-glutamate 5-semialdehyde. This is N-acetyl-gamma-glutamyl-phosphate reductase from Buchnera aphidicola subsp. Acyrthosiphon pisum (strain Tuc7).